A 317-amino-acid chain; its full sequence is Olfactory receptor 5K17 (317 aa).

Residues 1–28 (MMKANHSLTVEFILIGFSDHTDLKTLLF) lie on the Extracellular side of the membrane. N5 is a glycosylation site (N-linked (GlcNAc...) asparagine). The chain crosses the membrane as a helical span at residues 29 to 49 (LLFSAIYLVTIVGNLGLVALI). At 50–56 (YMEPRLH) the chain is on the cytoplasmic side. A helical membrane pass occupies residues 57-77 (TPMYIFLGNLALMDSCCSCAI). Residues 78–93 (TPKMLENFFSVDRRIS) lie on the Extracellular side of the membrane. The helical transmembrane segment at 94-114 (LYECMVQFYFLCLAETADCFL) threads the bilayer. C97 and C189 form a disulfide bridge. At 115 to 144 (LAAMAYDRYVAICNPLQYHTMMSKKLSIQM) the chain is on the cytoplasmic side. Residues 145-165 (SIGTFIASNLHSLIHTGCLLR) traverse the membrane as a helical segment. The Extracellular portion of the chain corresponds to 166 to 198 (LNFCKSRRIDHFFCDILPLYKLSCTDPFINELM). The chain crosses the membrane as a helical span at residues 199–219 (LYIFSMPIQVFTITTVLVSYS). At 220–239 (CILLTVFKMKSKDGRGKAFS) the chain is on the cytoplasmic side. The helical transmembrane segment at 240-259 (TCASHFFSVSIFYICLLMYI) threads the bilayer. Residues 260–268 (GPSKNSNKD) are Extracellular-facing. The chain crosses the membrane as a helical span at residues 269-289 (IPVGVFYTIVIPLLNPFIYSL). The Cytoplasmic portion of the chain corresponds to 290 to 317 (RNKEVVNAVKKVMKTHSIFKNSSASIAH).

It belongs to the G-protein coupled receptor 1 family.

Its subcellular location is the cell membrane. Potential odorant receptor. This chain is Olfactory receptor 5K17, found in Mus musculus (Mouse).